The chain runs to 249 residues: Phosphatidylserine decarboxylase proenzyme (249 aa).

S208 serves as the catalytic Schiff-base intermediate with substrate; via pyruvic acid. S208 carries the post-translational modification Pyruvic acid (Ser); by autocatalysis.

This sequence belongs to the phosphatidylserine decarboxylase family. PSD-A subfamily. As to quaternary structure, heterodimer of a large membrane-associated beta subunit and a small pyruvoyl-containing alpha subunit. Pyruvate serves as cofactor. Is synthesized initially as an inactive proenzyme. Formation of the active enzyme involves a self-maturation process in which the active site pyruvoyl group is generated from an internal serine residue via an autocatalytic post-translational modification. Two non-identical subunits are generated from the proenzyme in this reaction, and the pyruvate is formed at the N-terminus of the alpha chain, which is derived from the carboxyl end of the proenzyme. The post-translation cleavage follows an unusual pathway, termed non-hydrolytic serinolysis, in which the side chain hydroxyl group of the serine supplies its oxygen atom to form the C-terminus of the beta chain, while the remainder of the serine residue undergoes an oxidative deamination to produce ammonia and the pyruvoyl prosthetic group on the alpha chain.

The protein resides in the cell membrane. It catalyses the reaction a 1,2-diacyl-sn-glycero-3-phospho-L-serine + H(+) = a 1,2-diacyl-sn-glycero-3-phosphoethanolamine + CO2. Its pathway is phospholipid metabolism; phosphatidylethanolamine biosynthesis; phosphatidylethanolamine from CDP-diacylglycerol: step 2/2. Catalyzes the formation of phosphatidylethanolamine (PtdEtn) from phosphatidylserine (PtdSer). The chain is Phosphatidylserine decarboxylase proenzyme from Erythrobacter litoralis (strain HTCC2594).